We begin with the raw amino-acid sequence, 309 residues long: 15-cis-phytoene synthase (309 aa).

The disordered stretch occupies residues Leu290–Leu309.

This sequence belongs to the phytoene/squalene synthase family. Requires ATP as cofactor. It depends on Mn(2+) as a cofactor. Mg(2+) is required as a cofactor.

The enzyme catalyses 2 (2E,6E,10E)-geranylgeranyl diphosphate = 15-cis-phytoene + 2 diphosphate. It participates in carotenoid biosynthesis; phytoene biosynthesis. Inhibited by phosphate ions and squalestatin. In terms of biological role, involved in the biosynthesis of carotenoids. Catalyzes the condensation of two molecules of geranylgeranyl diphosphate (GGPP) to give prephytoene diphosphate (PPPP) and the subsequent rearrangement of the cyclopropylcarbinyl intermediate to yield the 15-cis-phytoene isomer. The protein is 15-cis-phytoene synthase (crtB) of Pantoea ananas (Erwinia uredovora).